The primary structure comprises 491 residues: Probable glycine dehydrogenase (decarboxylating) subunit 2 (491 aa).

K264 is subject to N6-(pyridoxal phosphate)lysine.

Belongs to the GcvP family. C-terminal subunit subfamily. As to quaternary structure, the glycine cleavage system is composed of four proteins: P, T, L and H. In this organism, the P 'protein' is a heterodimer of two subunits. The cofactor is pyridoxal 5'-phosphate.

It catalyses the reaction N(6)-[(R)-lipoyl]-L-lysyl-[glycine-cleavage complex H protein] + glycine + H(+) = N(6)-[(R)-S(8)-aminomethyldihydrolipoyl]-L-lysyl-[glycine-cleavage complex H protein] + CO2. Its function is as follows. The glycine cleavage system catalyzes the degradation of glycine. The P protein binds the alpha-amino group of glycine through its pyridoxal phosphate cofactor; CO(2) is released and the remaining methylamine moiety is then transferred to the lipoamide cofactor of the H protein. This is Probable glycine dehydrogenase (decarboxylating) subunit 2 from Coxiella burnetii (strain CbuG_Q212) (Coxiella burnetii (strain Q212)).